The chain runs to 442 residues: Histidine--tRNA ligase (442 aa).

It belongs to the class-II aminoacyl-tRNA synthetase family. In terms of assembly, homodimer.

It localises to the cytoplasm. The enzyme catalyses tRNA(His) + L-histidine + ATP = L-histidyl-tRNA(His) + AMP + diphosphate + H(+). This Helicobacter pylori (strain G27) protein is Histidine--tRNA ligase.